We begin with the raw amino-acid sequence, 530 residues long: MQKKQLWERYKNLLYHDAELELSVDTSRIDFPEGFLEEMEPRLQQAYQEMEALEKGAVANPDENRMVGHYWLRAPEQAPEAALSEEITSTLAAIKAFASSVHGGNIAAPDGHRFTDLLIIGIGGSALGPQFVADSLGGPGDRLRIWFFDNTDPDGMDKVLSRIGTALKQTLVVVISKSGGTKETRNGMLEARRAFERAGLHFAAHAVAVTGSGSELDGTASWESWLGVFPMWDWVGGRTSVTSAVGLLPAALQGIDVERLLAGARACDQKTRSRVTRENPAALLALSWFHATRGKGARDMVLLPYKDRLLLFSRYLQQLIMESLGKELDRDGNRVLQGIAVYGNKGSTDQHAYVQQLREGVHNFFVTFIEVLKDREGPSLEVEPGATSGDYLSGFFQGTRAALYEKGRESVTITVRELSPVSIGALIALYERAVGLYASLVNVNAYHQPGVEAGKKAAGAVLKLQGEIVEMLRRQPNREFTGEEMALALARPEEVETVFMILRHLAANGDHGVSVTVKDKIWENKYRSKG.

The Proton donor role is filled by glutamate 322. Active-site residues include histidine 351 and lysine 455.

Belongs to the GPI family.

The protein resides in the cytoplasm. It carries out the reaction alpha-D-glucose 6-phosphate = beta-D-fructose 6-phosphate. It functions in the pathway carbohydrate biosynthesis; gluconeogenesis. Its pathway is carbohydrate degradation; glycolysis; D-glyceraldehyde 3-phosphate and glycerone phosphate from D-glucose: step 2/4. Catalyzes the reversible isomerization of glucose-6-phosphate to fructose-6-phosphate. This Geobacter sp. (strain M21) protein is Glucose-6-phosphate isomerase.